The sequence spans 438 residues: Na(+)/H(+) antiporter NhaA (438 aa).

Transmembrane regions (helical) follow at residues 23–43 (FGGI…NSFL), 62–82 (FFIG…LFFL), 104–124 (SFPV…YFFL), 133–153 (GFGI…MLLG), 162–182 (VFLI…IALF), 185–205 (TNLK…LAVL), 221–241 (VLLW…AVIL), 302–322 (FLAP…NAGV), 337–357 (LGVI…ITFI), 372–392 (WWHI…SMFI), and 410–430 (IAIL…LFAL).

The protein belongs to the NhaA Na(+)/H(+) (TC 2.A.33) antiporter family.

It localises to the cell inner membrane. The catalysed reaction is Na(+)(in) + 2 H(+)(out) = Na(+)(out) + 2 H(+)(in). Its function is as follows. Na(+)/H(+) antiporter that extrudes sodium in exchange for external protons. This chain is Na(+)/H(+) antiporter NhaA, found in Helicobacter pylori (strain HPAG1).